The following is a 751-amino-acid chain: Diamine oxidase [copper-containing] (751 aa).

The signal sequence occupies residues 1–22 (MSLAFGWAAVILLLQTADTASA). 2 N-linked (GlcNAc...) asparagine glycosylation sites follow: Asn-61 and Asn-110. The active-site Proton acceptor is the Asp-373. Cys-391 and Cys-417 are disulfide-bonded. The active-site Schiff-base intermediate with substrate; via topaquinone is Tyr-461. Position 461 is a 2',4',5'-topaquinone (Tyr-461). Cu(2+)-binding residues include His-510 and His-512. 3 residues coordinate Ca(2+): Asp-519, Leu-520, and Asp-521. Asn-538 is a glycosylation site (N-linked (GlcNAc...) asparagine). Ca(2+) is bound by residues Glu-562, Phe-653, Asn-656, Glu-658, Asp-664, and Leu-665. His-675 lines the Cu(2+) pocket. N-linked (GlcNAc...) asparagine glycosylation is present at Asn-745.

This sequence belongs to the copper/topaquinone oxidase family. As to quaternary structure, homodimer; disulfide-linked. Requires Cu(2+) as cofactor. Ca(2+) is required as a cofactor. It depends on L-topaquinone as a cofactor. Topaquinone (TPQ) is generated by copper-dependent autoxidation of a specific tyrosyl residue. Post-translationally, N-glycosylated.

The protein localises to the secreted. It localises to the extracellular space. The protein resides in the cell membrane. It carries out the reaction histamine + O2 + H2O = imidazole-4-acetaldehyde + H2O2 + NH4(+). The catalysed reaction is N(tau)-methylhistamine + O2 + H2O = 1-methylimidazole-4-acetaldehyde + H2O2 + NH4(+). It catalyses the reaction putrescine + O2 + H2O = 4-aminobutanal + H2O2 + NH4(+). The enzyme catalyses cadaverine + O2 + H2O = 5-aminopentanal + H2O2 + NH4(+). Its activity is regulated as follows. Inhibited by amiloride and amiloride analogs. Functionally, catalyzes the oxidative deamination of primary amines to the corresponding aldehydes with the concomitant production of hydrogen peroxide and ammonia. Its preferred substrates in vitro are the diamines histamine and 1-methylhistamine and it could therefore play a role in allergic and immune responses. Has a broad specificity for diamines and can also act on cadaverine and putrescine, two products of amino acid catabolism. It could also act on polyamines, like spermidine and spermine though less efficiently, and regulate various biological processes. This is Diamine oxidase [copper-containing] from Mus musculus (Mouse).